The sequence spans 346 residues: MFGFDNLILGVYLFNFLLILTATYTDIKERIIPHFVIILMLIVNLPIGYYFFGFDAITSFFATLILCLILGVGMGGGDVKMFTALSPLFAAETIYFVPKDISILIGLSALFAAIFPMTKILKNYWKDIIPSSAYLAMLIGIIVSITEIYSIGNTKTILWSYIILSIFISRKIPKYRIISNKLGYITPIYLIGFYLLNPAYFVSENVLISFFVYIGQLSLISLVIYALTGAEISSKKQISDLKEGDIIRDIVTIKENGEVTVENANILKRFKHMIYGEMGKLEGKSLMTDGEGLSDENLELLNKLQNEGKIGGELNVLTTYPFVPFVLVAYCVITLLNMGVINYLVG.

Helical transmembrane passes span 1-21 (MFGF…LILT), 31-51 (IIPH…GYYF), 56-76 (AITS…GMGG), 77-97 (GDVK…IYFV), 101-121 (ISIL…TKIL), 128-148 (IIPS…ITEI), 149-169 (YSIG…IFIS), 182-202 (LGYI…AYFV), 206-226 (VLIS…VIYA), and 321-341 (PFVP…MGVI).

It belongs to the peptidase A24 family.

Its subcellular location is the cell membrane. In terms of biological role, peptidase that processes the N-terminus of prepilins. Specifically cleaves proteins with a class III (type IV pilin-like) signal sequence, such as the major structural pilin EpdE and the minor pilins EpdA, EpdC and EpdD. Is not able to cleave the preflagellin subunit FlaB2. This is Prepilin peptidase EppA from Methanococcus maripaludis (strain DSM 14266 / JCM 13030 / NBRC 101832 / S2 / LL).